We begin with the raw amino-acid sequence, 321 residues long: Cytochrome c biogenesis protein CcsA (321 aa).

The next 7 membrane-spanning stretches (helical) occupy residues 9-29 (ILTHISFSTISIVITIHLITL), 44-64 (GMIATFFSITGFLVSRWVSSG), 68-88 (LSNLYESLIFLSWTLYILHTI), 143-163 (MLLSYATLLCGSLLSAALLII), 225-245 (VISLGFTLLTVGILCGAVWAN), 259-273 (TWAFITWTIFAIYLH), and 288-308 (VASIGFLIIWICYFGINLLGI).

Belongs to the CcmF/CycK/Ccl1/NrfE/CcsA family. In terms of assembly, may interact with Ccs1.

The protein resides in the plastid. The protein localises to the chloroplast thylakoid membrane. Functionally, required during biogenesis of c-type cytochromes (cytochrome c6 and cytochrome f) at the step of heme attachment. In Zea mays (Maize), this protein is Cytochrome c biogenesis protein CcsA.